The sequence spans 167 residues: Ribosome maturation factor RimM (167 aa).

In terms of domain architecture, PRC barrel spans 92-166; sequence DDEFYHADLI…RIVADPPEEQ (75 aa).

Belongs to the RimM family. As to quaternary structure, binds ribosomal protein uS19.

It localises to the cytoplasm. An accessory protein needed during the final step in the assembly of 30S ribosomal subunit, possibly for assembly of the head region. Essential for efficient processing of 16S rRNA. May be needed both before and after RbfA during the maturation of 16S rRNA. It has affinity for free ribosomal 30S subunits but not for 70S ribosomes. The sequence is that of Ribosome maturation factor RimM from Paracoccus denitrificans (strain Pd 1222).